Here is a 997-residue protein sequence, read N- to C-terminus: Translation initiation factor IF-2 (997 aa).

The segment at 101 to 409 is disordered; it reads ELAAEQAAAR…QHQDRRHEQV (309 aa). Low complexity-rich tracts occupy residues 116-185, 195-208, and 244-280; these read AEAV…QAEP, AAPA…VEPA, and PSAP…PAAP. A compositionally biased stretch (basic and acidic residues) spans 281–292; it reads DRAREEARRAAE. Residues 385–394 show a composition bias toward gly residues; sequence RAGGKGGRGG. A compositionally biased stretch (basic and acidic residues) spans 400-409; it reads QHQDRRHEQV. One can recognise a tr-type G domain in the interval 498–665; that stretch reads PRAPVVTVMG…NVLLQAEILE (168 aa). The interval 507 to 514 is G1; it reads GHVDHGKT. 507–514 contributes to the GTP binding site; that stretch reads GHVDHGKT. Positions 532-536 are G2; the sequence is GITQH. Residues 553 to 556 form a G3 region; that stretch reads DTPG. GTP is bound by residues 553 to 557 and 607 to 610; these read DTPGH and NKID. A G4 region spans residues 607-610; the sequence is NKID. Residues 643–645 are G5; that stretch reads SAK.

This sequence belongs to the TRAFAC class translation factor GTPase superfamily. Classic translation factor GTPase family. IF-2 subfamily.

Its subcellular location is the cytoplasm. In terms of biological role, one of the essential components for the initiation of protein synthesis. Protects formylmethionyl-tRNA from spontaneous hydrolysis and promotes its binding to the 30S ribosomal subunits. Also involved in the hydrolysis of GTP during the formation of the 70S ribosomal complex. The chain is Translation initiation factor IF-2 from Bordetella bronchiseptica (strain ATCC BAA-588 / NCTC 13252 / RB50) (Alcaligenes bronchisepticus).